The chain runs to 207 residues: Ion-translocating oxidoreductase complex subunit G (207 aa).

The chain crosses the membrane as a helical span at residues 11–31 (GILLGFIALLCTIISTGIFFL). The residue at position 175 (threonine 175) is an FMN phosphoryl threonine.

Belongs to the RnfG family. The complex is composed of six subunits: RnfA, RnfB, RnfC, RnfD, RnfE and RnfG. Requires FMN as cofactor.

It localises to the cell inner membrane. Functionally, part of a membrane-bound complex that couples electron transfer with translocation of ions across the membrane. This Haemophilus influenzae (strain 86-028NP) protein is Ion-translocating oxidoreductase complex subunit G.